Reading from the N-terminus, the 157-residue chain is NAD(P)H-quinone oxidoreductase subunit N (157 aa).

It belongs to the complex I NdhN subunit family. In terms of assembly, NDH-1 can be composed of about 15 different subunits; different subcomplexes with different compositions have been identified which probably have different functions.

It localises to the cellular thylakoid membrane. The catalysed reaction is a plastoquinone + NADH + (n+1) H(+)(in) = a plastoquinol + NAD(+) + n H(+)(out). The enzyme catalyses a plastoquinone + NADPH + (n+1) H(+)(in) = a plastoquinol + NADP(+) + n H(+)(out). Functionally, NDH-1 shuttles electrons from an unknown electron donor, via FMN and iron-sulfur (Fe-S) centers, to quinones in the respiratory and/or the photosynthetic chain. The immediate electron acceptor for the enzyme in this species is believed to be plastoquinone. Couples the redox reaction to proton translocation, and thus conserves the redox energy in a proton gradient. Cyanobacterial NDH-1 also plays a role in inorganic carbon-concentration. This Synechococcus sp. (strain CC9902) protein is NAD(P)H-quinone oxidoreductase subunit N.